We begin with the raw amino-acid sequence, 109 residues long: Transcription initiation factor IIA subunit 2 (109 aa).

The protein belongs to the TFIIA subunit 2 family. In terms of assembly, TFIIA is a heterodimer of the large unprocessed subunit 1 and a small subunit gamma. It was originally believed to be a heterotrimer of an alpha (p35), a beta (p19) and a gamma subunit (p12). Interacts with NCOA6 general coactivator. TFIIA forms a complex with TBP. Interacts with HSF1 (via transactivation domain). Part of TBP-based Pol II pre-initiation complex (PIC), in which Pol II core assembles with general transcription factors and other specific initiation factors including GTF2E1, GTF2E2, GTF2F1, GTF2F2, TCEA1, ERCC2, ERCC3, GTF2H2, GTF2H3, GTF2H4, GTF2H5, GTF2A1, GTF2A2, GTF2B and TBP; this large multi-subunit PIC complex mediates DNA unwinding and targets Pol II core to the transcription start site where the first phosphodiester bond forms. (Microbial infection) Interacts with SV40 Large T antigen.

The protein resides in the nucleus. In terms of biological role, TFIIA is a component of the transcription machinery of RNA polymerase II and plays an important role in transcriptional activation. TFIIA in a complex with TBP mediates transcriptional activity. This is Transcription initiation factor IIA subunit 2 (GTF2A2) from Homo sapiens (Human).